The sequence spans 200 residues: ADP-ribosylation factor-like protein 4A (200 aa).

Gly-2 carries N-myristoyl glycine lipidation. GTP-binding positions include 27-34 (GLDCAGKT), 75-79 (DVGGQ), and 134-137 (NKQD).

This sequence belongs to the small GTPase superfamily. Arf family. As to quaternary structure, interacts with CYTH2. Interacts with KPNA2; the interaction is direct. Does not interact with ARL4A. Post-translationally, myristoylated.

It is found in the cell membrane. The protein localises to the cytoplasm. The protein resides in the nucleus. Its subcellular location is the nucleolus. Its function is as follows. Small GTP-binding protein which cycles between an inactive GDP-bound and an active GTP-bound form, and the rate of cycling is regulated by guanine nucleotide exchange factors (GEF) and GTPase-activating proteins (GAP). GTP-binding protein that does not act as an allosteric activator of the cholera toxin catalytic subunit. Recruits CYTH1, CYTH2, CYTH3 and CYTH4 to the plasma membrane in GDP-bound form. This is ADP-ribosylation factor-like protein 4A (ARL4A) from Homo sapiens (Human).